Consider the following 637-residue polypeptide: Nuclear receptor subfamily 2 group C member 1-A (637 aa).

Residues 149–224 constitute a DNA-binding region (nuclear receptor); the sequence is VELCVVCGDK…LGMKQDSVQC (76 aa). NR C4-type zinc fingers lie at residues 152 to 172 and 188 to 207; these read CVVC…CEGC and CRGS…CQYC. Residues 383 to 624 form the NR LBD domain; that stretch reads CLGSNANLLH…SIIPYILRME (242 aa).

The protein belongs to the nuclear hormone receptor family. NR2 subfamily.

It is found in the nucleus. Functionally, orphan nuclear receptor. Binds the IR7 element in the promoter of its own gene in an autoregulatory negative feedback mechanism. Primarily repressor of a broad range of genes. Binds to hormone response elements (HREs) consisting of two 5'-AGGTCA-3' half site direct repeat consensus sequences. This is Nuclear receptor subfamily 2 group C member 1-A (nr2c1-a) from Xenopus laevis (African clawed frog).